We begin with the raw amino-acid sequence, 253 residues long: Probable transcriptional regulatory protein Krad_3057 (253 aa).

It belongs to the TACO1 family.

The protein resides in the cytoplasm. This chain is Probable transcriptional regulatory protein Krad_3057, found in Kineococcus radiotolerans (strain ATCC BAA-149 / DSM 14245 / SRS30216).